Here is a 414-residue protein sequence, read N- to C-terminus: Enolase (414 aa).

Glutamine 162 provides a ligand contact to (2R)-2-phosphoglycerate. The active-site Proton donor is glutamate 204. Aspartate 239, glutamate 280, and aspartate 307 together coordinate Mg(2+). The (2R)-2-phosphoglycerate site is built by lysine 332, arginine 361, serine 362, and lysine 383. Lysine 332 serves as the catalytic Proton acceptor.

Belongs to the enolase family. Mg(2+) serves as cofactor.

It localises to the cytoplasm. The protein localises to the secreted. It is found in the cell surface. The catalysed reaction is (2R)-2-phosphoglycerate = phosphoenolpyruvate + H2O. The protein operates within carbohydrate degradation; glycolysis; pyruvate from D-glyceraldehyde 3-phosphate: step 4/5. Its function is as follows. Catalyzes the reversible conversion of 2-phosphoglycerate (2-PG) into phosphoenolpyruvate (PEP). It is essential for the degradation of carbohydrates via glycolysis. In Campylobacter jejuni subsp. jejuni serotype O:2 (strain ATCC 700819 / NCTC 11168), this protein is Enolase.